The following is a 126-amino-acid chain: Urease subunit beta (126 aa).

Belongs to the urease beta subunit family. In terms of assembly, heterotrimer of UreA (gamma), UreB (beta) and UreC (alpha) subunits. Three heterotrimers associate to form the active enzyme.

It localises to the cytoplasm. It catalyses the reaction urea + 2 H2O + H(+) = hydrogencarbonate + 2 NH4(+). Its pathway is nitrogen metabolism; urea degradation; CO(2) and NH(3) from urea (urease route): step 1/1. This is Urease subunit beta from Sporosarcina pasteurii (Bacillus pasteurii).